We begin with the raw amino-acid sequence, 224 residues long: UPF0758 protein Neut_0782 (224 aa).

Residues 102-224 (IMDSPQSVRS…TVSFAERGLI (123 aa)) form the MPN domain. Zn(2+) is bound by residues histidine 173, histidine 175, and aspartate 186. Residues 173-186 (HNHPSGVAEPSRAD) carry the JAMM motif motif.

The protein belongs to the UPF0758 family.

The sequence is that of UPF0758 protein Neut_0782 from Nitrosomonas eutropha (strain DSM 101675 / C91 / Nm57).